Here is a 121-residue protein sequence, read N- to C-terminus: Neuropeptide-like protein 7 (121 aa).

Residues 1-22 (MYIKAALLIVVLFGVASQITSA) form the signal peptide.

In terms of biological role, may regulate lifespan in response to food availability and oxidative stress. The protein is Neuropeptide-like protein 7 of Caenorhabditis elegans.